We begin with the raw amino-acid sequence, 248 residues long: UDP-N-acetyl-D-mannosaminuronic acid transferase (248 aa).

It belongs to the glycosyltransferase 26 family.

The catalysed reaction is UDP-N-acetyl-alpha-D-mannosaminouronate + N-acetyl-alpha-D-glucosaminyl-di-trans,octa-cis-undecaprenyl diphosphate = beta-D-ManNAcA-(1-&gt;4)-alpha-D-GlcNAc-di-trans,octa-cis-undecaprenyl diphosphate + UDP + H(+). Its pathway is bacterial outer membrane biogenesis; enterobacterial common antigen biosynthesis. In terms of biological role, catalyzes the synthesis of Und-PP-GlcNAc-ManNAcA (Lipid II), the second lipid-linked intermediate involved in enterobacterial common antigen (ECA) synthesis. This chain is UDP-N-acetyl-D-mannosaminuronic acid transferase, found in Klebsiella pneumoniae subsp. pneumoniae (strain ATCC 700721 / MGH 78578).